Reading from the N-terminus, the 349-residue chain is DNA replication and repair protein RecF (349 aa).

30–37 (GKNGSGKT) serves as a coordination point for ATP.

Belongs to the RecF family.

The protein localises to the cytoplasm. In terms of biological role, the RecF protein is involved in DNA metabolism; it is required for DNA replication and normal SOS inducibility. RecF binds preferentially to single-stranded, linear DNA. It also seems to bind ATP. The sequence is that of DNA replication and repair protein RecF from Francisella tularensis subsp. mediasiatica (strain FSC147).